A 371-amino-acid chain; its full sequence is Alanine racemase (371 aa).

Catalysis depends on lysine 40, which acts as the Proton acceptor; specific for D-alanine. Lysine 40 bears the N6-(pyridoxal phosphate)lysine mark. Arginine 138 serves as a coordination point for substrate. Tyrosine 267 functions as the Proton acceptor; specific for L-alanine in the catalytic mechanism. Methionine 314 contributes to the substrate binding site.

It belongs to the alanine racemase family. Pyridoxal 5'-phosphate serves as cofactor.

It carries out the reaction L-alanine = D-alanine. Its pathway is amino-acid biosynthesis; D-alanine biosynthesis; D-alanine from L-alanine: step 1/1. Catalyzes the interconversion of L-alanine and D-alanine. May also act on other amino acids. This Ligilactobacillus salivarius (strain UCC118) (Lactobacillus salivarius) protein is Alanine racemase (alr).